The sequence spans 1390 residues: Hepatocyte growth factor receptor (1390 aa).

The N-terminal stretch at 1–24 (MKAPAVLAPGILVLLFTLVQRSNG) is a signal peptide. Residues 25–932 (ECKEALAKSE…VIVQPDQNFT (908 aa)) are Extracellular-facing. The 489-residue stretch at 27 to 515 (KEALAKSEMN…TGKKITKIPL (489 aa)) folds into the Sema domain. N45 carries an N-linked (GlcNAc...) asparagine glycan. Intrachain disulfides connect C95/C101, C98/C160, C133/C141, and C172/C175. An N-linked (GlcNAc...) asparagine glycan is attached at N106. Residue N149 is glycosylated (N-linked (GlcNAc...) asparagine). Residue N202 is glycosylated (N-linked (GlcNAc...) asparagine). Intrachain disulfides connect C298–C363 and C385–C397. N399 and N405 each carry an N-linked (GlcNAc...) asparagine glycan. 4 disulfides stabilise this stretch: C520/C538, C526/C561, C529/C545, and C541/C551. IPT/TIG domains follow at residues 563-655 (PAIY…FSYV), 657-739 (PVIT…FSYR), and 742-836 (PIVY…LIYV). O-linked (Man) threonine glycosylation occurs at T582. Residue N607 is glycosylated (N-linked (GlcNAc...) asparagine). A disulfide bridge links C610 with C624. A glycan (N-linked (GlcNAc...) asparagine) is linked at N635. O-linked (Man) threonine glycosylation is present at T676. The cysteines at positions 697 and 709 are disulfide-linked. T761 carries O-linked (Man) threonine glycosylation. N-linked (GlcNAc...) asparagine glycans are attached at residues N785, N879, and N930. Residues 933–955 (GLIAGVVSISTALLLLLGFFLWL) form a helical membrane-spanning segment. The Cytoplasmic segment spans residues 956 to 1390 (KKRKQIKDLG…TRPASFWETS (435 aa)). At S966 the chain carries Phosphoserine. T977 bears the Phosphothreonine mark. A phosphoserine mark is found at S990, S997, and S1000. Y1003 is modified (phosphotyrosine). The region spanning 1078-1345 (VHFNEVIGRG…RISAIFSTFI (268 aa)) is the Protein kinase domain. ATP-binding positions include 1084 to 1092 (IGRGHFGCV) and K1110. D1204 functions as the Proton acceptor in the catalytic mechanism. Residues 1212–1390 (LDEKFTVKVA…TRPASFWETS (179 aa)) form an interaction with RANBP9 region. The residue at position 1230 (Y1230) is a Phosphotyrosine. Phosphotyrosine; by autocatalysis is present on residues Y1234 and Y1235. A Phosphothreonine modification is found at T1289. Residues 1320–1359 (WHPKAEMRPSFSELVSRISAIFSTFIGEHYVHVNATYVNV) form an interaction with MUC20 region. Y1349 and Y1356 each carry phosphotyrosine; by autocatalysis. A Phosphotyrosine modification is found at Y1365.

Belongs to the protein kinase superfamily. Tyr protein kinase family. In terms of assembly, heterodimer made of an alpha chain (50 kDa) and a beta chain (145 kDa) which are disulfide linked. Binds PLXNB1. Interacts when phosphorylated with downstream effectors including STAT3, PIK3R1, SRC, PCLG1, GRB2 and GAB1. Interacts with SPSB1, SPSB2 and SPSB4. Interacts with INPP5D/SHIP1. When phosphorylated at Tyr-1356, interacts with INPPL1/SHIP2. Interacts with RANBP9 and RANBP10, as well as SPSB1, SPSB2, SPSB3 and SPSB4. SPSB1 binding occurs in the presence and in the absence of HGF, however HGF treatment has a positive effect on this interaction. Interacts with MUC20; prevents interaction with GRB2 and suppresses hepatocyte growth factor-induced cell proliferation. Interacts with GRB10. Interacts with PTPN1 and PTPN2. Interacts with LECT2; this interaction may have an antagonistic effect on receptor activation. Interacts with HSP90AA1 and HSP90AB1; the interaction suppresses MET kinase activity. Interacts with tensin TNS3. Interacts (when phosphorylated) with tensin TNS4 (via SH2 domain); the interaction increases MET protein stability by inhibiting MET endocytosis and subsequent lysosomal degradation. (Microbial infection) Interacts via extracytoplasmic residues 25-656 with L.monocytogenes InlB; MET can bind HGF, its endogenous ligand, and InlB simultaneously. InlB probably dimerizes upon binding to MET, which encourages subsequent dimerization of MET. In terms of processing, autophosphorylated in response to ligand binding on Tyr-1234 and Tyr-1235 in the kinase domain leading to further phosphorylation of Tyr-1349 and Tyr-1356 in the C-terminal multifunctional docking site. Dephosphorylated by PTPRJ at Tyr-1349 and Tyr-1365. Dephosphorylated by PTPN1 and PTPN2. Ubiquitinated. Ubiquitination by CBL regulates MET endocytosis, resulting in decreasing plasma membrane receptor abundance, and in endosomal degradation and/or recycling of internalized receptors. Post-translationally, O-mannosylation of IPT/TIG domains by TMEM260 is required for protein maturation. O-mannosylated residues are composed of single mannose glycans that are not elongated or modified. In terms of processing, (Microbial infection) Tyrosine phosphorylation is stimulated by L.monocytogenes InlB. Tyrosine phosphorylation is maximal 10-20 minutes after treatment with InlB and disappears by 60 minutes. The phosphorylated residues were not identified. Expressed in normal hepatocytes as well as in epithelial cells lining the stomach, the small and the large intestine. Found also in basal keratinocytes of esophagus and skin. High levels are found in liver, gastrointestinal tract, thyroid and kidney. Also present in the brain. Expressed in metaphyseal bone (at protein level).

Its subcellular location is the membrane. The protein resides in the secreted. The catalysed reaction is L-tyrosyl-[protein] + ATP = O-phospho-L-tyrosyl-[protein] + ADP + H(+). With respect to regulation, in its inactive state, the C-terminal tail interacts with the catalytic domain and inhibits the kinase activity. Upon ligand binding, the C-terminal tail is displaced and becomes phosphorylated, thus increasing the kinase activity. In terms of biological role, receptor tyrosine kinase that transduces signals from the extracellular matrix into the cytoplasm by binding to hepatocyte growth factor/HGF ligand. Regulates many physiological processes including proliferation, scattering, morphogenesis and survival. Ligand binding at the cell surface induces autophosphorylation of MET on its intracellular domain that provides docking sites for downstream signaling molecules. Following activation by ligand, interacts with the PI3-kinase subunit PIK3R1, PLCG1, SRC, GRB2, STAT3 or the adapter GAB1. Recruitment of these downstream effectors by MET leads to the activation of several signaling cascades including the RAS-ERK, PI3 kinase-AKT, or PLCgamma-PKC. The RAS-ERK activation is associated with the morphogenetic effects while PI3K/AKT coordinates prosurvival effects. During embryonic development, MET signaling plays a role in gastrulation, development and migration of neuronal precursors, angiogenesis and kidney formation. During skeletal muscle development, it is crucial for the migration of muscle progenitor cells and for the proliferation of secondary myoblasts. In adults, participates in wound healing as well as organ regeneration and tissue remodeling. Also promotes differentiation and proliferation of hematopoietic cells. May regulate cortical bone osteogenesis. Its function is as follows. (Microbial infection) Acts as a receptor for Listeria monocytogenes internalin InlB, mediating entry of the pathogen into cells. In Homo sapiens (Human), this protein is Hepatocyte growth factor receptor (MET).